Reading from the N-terminus, the 457-residue chain is tRNA(Ile)-lysidine synthase (457 aa).

27–32 is an ATP binding site; it reads SGGLDS.

Belongs to the tRNA(Ile)-lysidine synthase family.

The protein resides in the cytoplasm. The enzyme catalyses cytidine(34) in tRNA(Ile2) + L-lysine + ATP = lysidine(34) in tRNA(Ile2) + AMP + diphosphate + H(+). Functionally, ligates lysine onto the cytidine present at position 34 of the AUA codon-specific tRNA(Ile) that contains the anticodon CAU, in an ATP-dependent manner. Cytidine is converted to lysidine, thus changing the amino acid specificity of the tRNA from methionine to isoleucine. The chain is tRNA(Ile)-lysidine synthase from Hamiltonella defensa subsp. Acyrthosiphon pisum (strain 5AT).